Here is a 361-residue protein sequence, read N- to C-terminus: Protein RecA (361 aa).

77–84 (GPESSGKT) contacts ATP.

This sequence belongs to the RecA family.

Its subcellular location is the cytoplasm. Functionally, can catalyze the hydrolysis of ATP in the presence of single-stranded DNA, the ATP-dependent uptake of single-stranded DNA by duplex DNA, and the ATP-dependent hybridization of homologous single-stranded DNAs. It interacts with LexA causing its activation and leading to its autocatalytic cleavage. The protein is Protein RecA of Brucella suis (strain ATCC 23445 / NCTC 10510).